We begin with the raw amino-acid sequence, 309 residues long: ATP synthase gamma chain (309 aa).

The protein belongs to the ATPase gamma chain family. As to quaternary structure, F-type ATPases have 2 components, CF(1) - the catalytic core - and CF(0) - the membrane proton channel. CF(1) has five subunits: alpha(3), beta(3), gamma(1), delta(1), epsilon(1). CF(0) has three main subunits: a, b and c.

Its subcellular location is the cell membrane. In terms of biological role, produces ATP from ADP in the presence of a proton gradient across the membrane. The gamma chain is believed to be important in regulating ATPase activity and the flow of protons through the CF(0) complex. In Salinispora tropica (strain ATCC BAA-916 / DSM 44818 / JCM 13857 / NBRC 105044 / CNB-440), this protein is ATP synthase gamma chain.